Reading from the N-terminus, the 188-residue chain is Putative pre-16S rRNA nuclease (188 aa).

Residues 144–188 (HAPGRVVAGPKGRRKARHRGQGGTGTEQQADAGGRARPHATEGKG) are disordered. The segment covering 154–163 (KGRRKARHRG) has biased composition (basic residues).

Belongs to the YqgF nuclease family.

The protein localises to the cytoplasm. Functionally, could be a nuclease involved in processing of the 5'-end of pre-16S rRNA. This chain is Putative pre-16S rRNA nuclease, found in Kineococcus radiotolerans (strain ATCC BAA-149 / DSM 14245 / SRS30216).